A 182-amino-acid chain; its full sequence is ATP synthase subunit b, chloroplastic (182 aa).

The chain crosses the membrane as a helical span at residues 36-56; that stretch reads ILLLLLGLMYVLKEFLGSILV.

It belongs to the ATPase B chain family. F-type ATPases have 2 components, F(1) - the catalytic core - and F(0) - the membrane proton channel. F(1) has five subunits: alpha(3), beta(3), gamma(1), delta(1), epsilon(1). F(0) has four main subunits: a(1), b(1), b'(1) and c(10-14). The alpha and beta chains form an alternating ring which encloses part of the gamma chain. F(1) is attached to F(0) by a central stalk formed by the gamma and epsilon chains, while a peripheral stalk is formed by the delta, b and b' chains.

The protein localises to the plastid. Its subcellular location is the chloroplast thylakoid membrane. In terms of biological role, f(1)F(0) ATP synthase produces ATP from ADP in the presence of a proton or sodium gradient. F-type ATPases consist of two structural domains, F(1) containing the extramembraneous catalytic core and F(0) containing the membrane proton channel, linked together by a central stalk and a peripheral stalk. During catalysis, ATP synthesis in the catalytic domain of F(1) is coupled via a rotary mechanism of the central stalk subunits to proton translocation. Its function is as follows. Component of the F(0) channel, it forms part of the peripheral stalk, linking F(1) to F(0). This Gracilaria tenuistipitata var. liui (Red alga) protein is ATP synthase subunit b, chloroplastic.